Here is a 418-residue protein sequence, read N- to C-terminus: 3-isopropylmalate dehydratase large subunit (418 aa).

[4Fe-4S] cluster-binding residues include cysteine 298, cysteine 358, and cysteine 361.

The protein belongs to the aconitase/IPM isomerase family. LeuC type 2 subfamily. Heterodimer of LeuC and LeuD. Requires [4Fe-4S] cluster as cofactor.

The enzyme catalyses (2R,3S)-3-isopropylmalate = (2S)-2-isopropylmalate. It functions in the pathway amino-acid biosynthesis; L-leucine biosynthesis; L-leucine from 3-methyl-2-oxobutanoate: step 2/4. Catalyzes the isomerization between 2-isopropylmalate and 3-isopropylmalate, via the formation of 2-isopropylmaleate. The polypeptide is 3-isopropylmalate dehydratase large subunit (Thermoanaerobacter sp. (strain X514)).